A 218-amino-acid polypeptide reads, in one-letter code: CD99 antigen-like protein 2 (218 aa).

The first 25 residues, 1–25, serve as a signal peptide directing secretion; that stretch reads MVAWRSAFLVCLAFSLATLVQRGSG. Residues 26–136 are Extracellular-facing; the sequence is DFDDFNLKDA…PGSGMVAETG (111 aa). A disordered region spans residues 72-128; that stretch reads LADALDDRNDRDDGRRKPIAGGGGFSDKDLEDIVGGGEYKPDKGKGDGRYGSNDDPG. Basic and acidic residues-rich tracts occupy residues 76-87 and 110-119; these read LDDRNDRDDGRR and YKPDKGKGDG. An O-linked (Xyl...) (chondroitin sulfate) serine glycan is attached at serine 129. Residues 137–157 traverse the membrane as a helical segment; sequence TIAGVASALAMALIGAVSSYI. Over 158–218 the chain is Cytoplasmic; the sequence is SYQQKKFCFS…EPPPSEPARI (61 aa).

The protein belongs to the CD99 family. Post-translationally, O-glycosylated.

It localises to the cell membrane. The protein localises to the cell junction. It is found in the secreted. Functionally, plays a role in a late step of leukocyte extravasation helping cells to overcome the endothelial basement membrane. Acts at the same site as, but independently of, PECAM1. Homophilic adhesion molecule, but these interactions may not be required for cell aggregation. The polypeptide is CD99 antigen-like protein 2 (CD99L2) (Pongo abelii (Sumatran orangutan)).